Here is a 362-residue protein sequence, read N- to C-terminus: Heat-inducible transcription repressor HrcA (362 aa).

Belongs to the HrcA family.

In terms of biological role, negative regulator of class I heat shock genes (grpE-dnaK-dnaJ and groELS operons). Prevents heat-shock induction of these operons. The chain is Heat-inducible transcription repressor HrcA from Rhizobium etli (strain CIAT 652).